A 217-amino-acid polypeptide reads, in one-letter code: Probable GTP-binding protein EngB (217 aa).

Positions 44 to 217 constitute an EngB-type G domain; the sequence is DRIEVCFAGR…TLRTIVATLG (174 aa). GTP-binding positions include 52-59, 79-83, 97-100, 164-167, and 198-200; these read GRSNVGKS, GRTQE, DLPG, TKAD, and TSS. The Mg(2+) site is built by serine 59 and threonine 81.

This sequence belongs to the TRAFAC class TrmE-Era-EngA-EngB-Septin-like GTPase superfamily. EngB GTPase family. Mg(2+) is required as a cofactor.

In terms of biological role, necessary for normal cell division and for the maintenance of normal septation. This Cereibacter sphaeroides (strain ATCC 17023 / DSM 158 / JCM 6121 / CCUG 31486 / LMG 2827 / NBRC 12203 / NCIMB 8253 / ATH 2.4.1.) (Rhodobacter sphaeroides) protein is Probable GTP-binding protein EngB.